Reading from the N-terminus, the 206-residue chain is Synaptosomal-associated protein 25 (206 aa).

The segment covering 1–20 (MAEDADMRNELEEMQRRADQ) has biased composition (basic and acidic residues). The segment at 1–25 (MAEDADMRNELEEMQRRADQLADES) is disordered. Residues 1 to 75 (MAEDADMRNE…QINKDMKEAE (75 aa)) form an interaction with CENPF region. In terms of domain architecture, t-SNARE coiled-coil homology 1 spans 19–81 (DQLADESLES…KEAEKNSTDL (63 aa)). 4 S-palmitoyl cysteine lipidation sites follow: Cys-85, Cys-88, Cys-90, and Cys-92. The tract at residues 111–120 (GVVASQPARV) is interaction with ZDHHC17. At Thr-138 the chain carries Phosphothreonine. In terms of domain architecture, t-SNARE coiled-coil homology 2 spans 140 to 202 (DARENEMDEN…DEANQRATKM (63 aa)). Phosphoserine occurs at positions 154 and 187.

It belongs to the SNAP-25 family. Part of the SNARE core complex containing SNAP25, VAMP2 and STX1A; this complex binds CPLX1. Found in a complex containing SYT1, SV2B and syntaxin-1. Found in a ternary complex with STX1A and VAMP8. Interacts with HSC70 and with SYT9, forming a complex with DNAJC5. The interaction with SYT9 is inhibited in presence of calcium. Isoform 1 and isoform 2 interact with BLOC1S6. Interacts with CENPF. Interacts with EQTN. Interacts with HGS. Interacts with KCNB1 (via N-terminus); reduces the voltage-dependent potassium channel KCNB1 activity in pancreatic beta cells. Interacts with OTOF. Interacts with RIMS1. Interacts with SNAPIN. Interacts with STXBP6. Interacts with TRIM9. Interacts with ZDHHC13 (via ANK repeats). Interacts with ZDHHC17 (via ANK repeats). Associates with the BLOC-1 complex. Interacts with PLCL1 (via C2 domain). Interacts with PRRT2; this interaction may impair the formation of the SNARE complex. Interacts with alpha-synuclein/SNCA. Interacts with PRPH2. Interacts with ROM1. Interacts with STX3. Palmitoylated. Cys-85 appears to be the main site, and palmitoylation is required for membrane association.

It localises to the cytoplasm. The protein localises to the perinuclear region. Its subcellular location is the cell membrane. It is found in the synapse. The protein resides in the synaptosome. It localises to the photoreceptor inner segment. Its function is as follows. t-SNARE involved in the molecular regulation of neurotransmitter release. May play an important role in the synaptic function of specific neuronal systems. Associates with proteins involved in vesicle docking and membrane fusion. Regulates plasma membrane recycling through its interaction with CENPF. Modulates the gating characteristics of the delayed rectifier voltage-dependent potassium channel KCNB1 in pancreatic beta cells. This is Synaptosomal-associated protein 25 (SNAP25) from Pongo abelii (Sumatran orangutan).